Here is a 276-residue protein sequence, read N- to C-terminus: Light-independent protochlorophyllide reductase iron-sulfur ATP-binding protein (276 aa).

Residues 12–17 (GIGKST) and lysine 41 contribute to the ATP site. Residue serine 16 participates in Mg(2+) binding. 2 residues coordinate [4Fe-4S] cluster: cysteine 97 and cysteine 131. Position 182–183 (182–183 (NR)) interacts with ATP.

Belongs to the NifH/BchL/ChlL family. As to quaternary structure, homodimer. Protochlorophyllide reductase is composed of three subunits; BchL, BchN and BchB. It depends on [4Fe-4S] cluster as a cofactor.

The enzyme catalyses chlorophyllide a + oxidized 2[4Fe-4S]-[ferredoxin] + 2 ADP + 2 phosphate = protochlorophyllide a + reduced 2[4Fe-4S]-[ferredoxin] + 2 ATP + 2 H2O. The protein operates within porphyrin-containing compound metabolism; bacteriochlorophyll biosynthesis (light-independent). Its function is as follows. Component of the dark-operative protochlorophyllide reductase (DPOR) that uses Mg-ATP and reduced ferredoxin to reduce ring D of protochlorophyllide (Pchlide) to form chlorophyllide a (Chlide). This reaction is light-independent. The L component serves as a unique electron donor to the NB-component of the complex, and binds Mg-ATP. The chain is Light-independent protochlorophyllide reductase iron-sulfur ATP-binding protein from Chlorobium luteolum (strain DSM 273 / BCRC 81028 / 2530) (Pelodictyon luteolum).